A 139-amino-acid polypeptide reads, in one-letter code: Small ribosomal subunit protein uS12m (139 aa).

Residues 1-29 (MSWSGPLRGLNTSLTCGPALVPRLWATCS) constitute a mitochondrion transit peptide. Residues 36 to 56 (MHRLGGPPKRPPQKLGPTEGR) are disordered.

This sequence belongs to the universal ribosomal protein uS12 family. Component of the mitochondrial ribosome small subunit (28S) which comprises a 12S rRNA and about 30 distinct proteins.

Its subcellular location is the mitochondrion. The sequence is that of Small ribosomal subunit protein uS12m (MRPS12) from Pongo abelii (Sumatran orangutan).